The sequence spans 569 residues: Adenine deaminase (569 aa).

The protein belongs to the metallo-dependent hydrolases superfamily. Adenine deaminase family. Mn(2+) serves as cofactor.

The enzyme catalyses adenine + H2O + H(+) = hypoxanthine + NH4(+). The sequence is that of Adenine deaminase from Desulfatibacillum aliphaticivorans.